We begin with the raw amino-acid sequence, 1050 residues long: RecBCD enzyme subunit RecB (1050 aa).

Positions 1-443 (MKPFNIFDSN…LQLVNNYRST (443 aa)) constitute a UvrD-like helicase ATP-binding domain. The DNA-binding and helicase activity, interacts with RecC stretch occupies residues 1–766 (MKPFNIFDSN…TNYVKLEGTQ (766 aa)). ATP is bound at residue 21-28 (ASAGTGKT). The UvrD-like helicase C-terminal domain occupies 458-701 (SPFLEIPGYL…KITTIHSSKG (244 aa)). The tract at residues 814 to 1050 (PKTIFSFSST…KAIQKCQAYH (237 aa)) is nuclease activity, interacts with RecD and RecA. Mg(2+) is bound by residues His859, Asp945, and Asp958. Catalysis depends on Asp958, which acts as the For nuclease activity.

This sequence belongs to the helicase family. UvrD subfamily. In terms of assembly, heterotrimer of RecB, RecC and RecD. All subunits contribute to DNA-binding. Interacts with RecA. Requires Mg(2+) as cofactor.

It catalyses the reaction Exonucleolytic cleavage (in the presence of ATP) in either 5'- to 3'- or 3'- to 5'-direction to yield 5'-phosphooligonucleotides.. The catalysed reaction is Couples ATP hydrolysis with the unwinding of duplex DNA by translocating in the 3'-5' direction.. The enzyme catalyses ATP + H2O = ADP + phosphate + H(+). A helicase/nuclease that prepares dsDNA breaks (DSB) for recombinational DNA repair. Binds to DSBs and unwinds DNA via a highly rapid and processive ATP-dependent bidirectional helicase activity. Unwinds dsDNA until it encounters a Chi (crossover hotspot instigator) sequence from the 3' direction. Cuts ssDNA a few nucleotides 3' to the Chi site. The properties and activities of the enzyme are changed at Chi. The Chi-altered holoenzyme produces a long 3'-ssDNA overhang and facilitates RecA-binding to the ssDNA for homologous DNA recombination and repair. Holoenzyme degrades any linearized DNA that is unable to undergo homologous recombination. In the holoenzyme this subunit contributes ATPase, 3'-5' helicase, exonuclease activity and loads RecA onto ssDNA. The sequence is that of RecBCD enzyme subunit RecB from Chlamydia pneumoniae (Chlamydophila pneumoniae).